The following is a 351-amino-acid chain: Nicotinate-nucleotide--dimethylbenzimidazole phosphoribosyltransferase (351 aa).

Glu313 functions as the Proton acceptor in the catalytic mechanism.

This sequence belongs to the CobT family.

The catalysed reaction is 5,6-dimethylbenzimidazole + nicotinate beta-D-ribonucleotide = alpha-ribazole 5'-phosphate + nicotinate + H(+). It functions in the pathway nucleoside biosynthesis; alpha-ribazole biosynthesis; alpha-ribazole from 5,6-dimethylbenzimidazole: step 1/2. In terms of biological role, catalyzes the synthesis of alpha-ribazole-5'-phosphate from nicotinate mononucleotide (NAMN) and 5,6-dimethylbenzimidazole (DMB). This chain is Nicotinate-nucleotide--dimethylbenzimidazole phosphoribosyltransferase, found in Mycobacterium leprae (strain Br4923).